Here is a 302-residue protein sequence, read N- to C-terminus: 4-hydroxy-tetrahydrodipicolinate synthase (302 aa).

Thr-55 is a pyruvate binding site. The Proton donor/acceptor role is filled by Tyr-144. Residue Lys-172 is the Schiff-base intermediate with substrate of the active site. Pyruvate is bound at residue Val-214.

It belongs to the DapA family. Homotetramer; dimer of dimers.

It is found in the cytoplasm. The enzyme catalyses L-aspartate 4-semialdehyde + pyruvate = (2S,4S)-4-hydroxy-2,3,4,5-tetrahydrodipicolinate + H2O + H(+). It participates in amino-acid biosynthesis; L-lysine biosynthesis via DAP pathway; (S)-tetrahydrodipicolinate from L-aspartate: step 3/4. Its function is as follows. Catalyzes the condensation of (S)-aspartate-beta-semialdehyde [(S)-ASA] and pyruvate to 4-hydroxy-tetrahydrodipicolinate (HTPA). The polypeptide is 4-hydroxy-tetrahydrodipicolinate synthase (Synechococcus sp. (strain CC9902)).